The sequence spans 1058 residues: Carbamoyl phosphate synthase large chain (1058 aa).

Residues 1 to 401 are carboxyphosphate synthetic domain; it reads MPKRTDIQKI…SLLKACRSLE (401 aa). ATP contacts are provided by Arg-129, Arg-169, Gly-175, Gly-176, Arg-208, Ile-210, Glu-215, Gly-241, Ile-242, His-243, Gln-284, and Glu-298. Positions 133-327 constitute an ATP-grasp 1 domain; that stretch reads KQLMEELEQP…IAKLAAKIAV (195 aa). Mg(2+) contacts are provided by Gln-284, Glu-298, and Asn-300. Gln-284, Glu-298, and Asn-300 together coordinate Mn(2+). Residues 402 to 546 form an oligomerization domain region; it reads IGVHHNEIPE…YSTYGWENES (145 aa). A carbamoyl phosphate synthetic domain region spans residues 547–929; sequence IRSDKESVLV…ALYKAFEASY (383 aa). Positions 671-861 constitute an ATP-grasp 2 domain; it reads EQALKELDIP…MAQVATKLIL (191 aa). Residues Arg-707, Ser-746, Ile-748, Glu-752, Gly-777, Val-778, His-779, Ser-780, Gln-820, and Glu-832 each contribute to the ATP site. 3 residues coordinate Mg(2+): Gln-820, Glu-832, and Asn-834. Mn(2+)-binding residues include Gln-820, Glu-832, and Asn-834. The 129-residue stretch at 930–1058 folds into the MGS-like domain; that stretch reads LHLPTFGNVV…ESRSFVTEAI (129 aa). Positions 930-1058 are allosteric domain; it reads LHLPTFGNVV…ESRSFVTEAI (129 aa).

Belongs to the CarB family. In terms of assembly, composed of two chains; the small (or glutamine) chain promotes the hydrolysis of glutamine to ammonia, which is used by the large (or ammonia) chain to synthesize carbamoyl phosphate. Tetramer of heterodimers (alpha,beta)4. Mg(2+) is required as a cofactor. The cofactor is Mn(2+).

It carries out the reaction hydrogencarbonate + L-glutamine + 2 ATP + H2O = carbamoyl phosphate + L-glutamate + 2 ADP + phosphate + 2 H(+). It catalyses the reaction hydrogencarbonate + NH4(+) + 2 ATP = carbamoyl phosphate + 2 ADP + phosphate + 2 H(+). Its pathway is amino-acid biosynthesis; L-arginine biosynthesis; carbamoyl phosphate from bicarbonate: step 1/1. It participates in pyrimidine metabolism; UMP biosynthesis via de novo pathway; (S)-dihydroorotate from bicarbonate: step 1/3. In terms of biological role, large subunit of the glutamine-dependent carbamoyl phosphate synthetase (CPSase). CPSase catalyzes the formation of carbamoyl phosphate from the ammonia moiety of glutamine, carbonate, and phosphate donated by ATP, constituting the first step of 2 biosynthetic pathways, one leading to arginine and/or urea and the other to pyrimidine nucleotides. The large subunit (synthetase) binds the substrates ammonia (free or transferred from glutamine from the small subunit), hydrogencarbonate and ATP and carries out an ATP-coupled ligase reaction, activating hydrogencarbonate by forming carboxy phosphate which reacts with ammonia to form carbamoyl phosphate. This is Carbamoyl phosphate synthase large chain from Streptococcus pneumoniae serotype 19F (strain G54).